The following is an 89-amino-acid chain: Small ribosomal subunit protein uS14A (89 aa).

It belongs to the universal ribosomal protein uS14 family. Part of the 30S ribosomal subunit. Contacts proteins S3 and S10.

Binds 16S rRNA, required for the assembly of 30S particles and may also be responsible for determining the conformation of the 16S rRNA at the A site. The chain is Small ribosomal subunit protein uS14A from Streptococcus equi subsp. zooepidemicus (strain MGCS10565).